Here is a 101-residue protein sequence, read N- to C-terminus: Enhancer of yellow 2 transcription factor (101 aa).

It belongs to the ENY2 family. As to quaternary structure, component of the nuclear pore complex (NPC)-associated TREX-2/AMEX complex (anchoring and mRNA export complex), composed of e(y)2, xmas and PCID2. Within the TREX-2/ AMEX complex, interactions with xmas is required for localization to the nuclear periphery. Component of the SAGA transcription coactivator-HAT complexes, at least composed of Ada2b, e(y)2, Pcaf/Gcn5, Taf10 and Nipped-A/Trrap. Within the SAGA complex, e(y)2, Sgf11, and not/nonstop form an additional subcomplex of SAGA called the DUB module (deubiquitination module). Component of the THO complex, composed of at least e(y)2, HPR1, THO2, THOC5, THOC6 and THOC7. Interacts with Taf9. Interacts with su(Hw) (via zinc fingers). Interacts with the nuclear pore complex (NPC). Interaction between the TREX-2/AMEX complex and the ORC complex is required for ORC localization to mRNPs, and consequently mRNA export. Within the TREX-2/AMEX-ORC complex, interacts with Orc6 and (via N-terminus or C-terminus) with Orc3. Interacts with the zinc finger protein CG9890. As to expression, ubiquitous.

The protein resides in the nucleus. The protein localises to the nucleoplasm. It is found in the cytoplasm. It localises to the nucleus membrane. Its function is as follows. Involved in mRNA export coupled transcription activation by association with both the TREX-2/AMEX and the SAGA complexes. The SAGA complex is a multiprotein complex that activates transcription by remodeling chromatin and mediating histone acetylation and deubiquitination. Within the SAGA complex, participates in a subcomplex that specifically deubiquitinates histone H2B. The SAGA complex is recruited to specific gene promoters by activators, where it is required for transcription. Required for nuclear receptor-mediated transactivation. Involved in transcription elongation by recruiting the THO complex onto nascent mRNA. The TREX-2/AMEX complex functions in docking export-competent ribonucleoprotein particles (mRNPs) to the nuclear entrance of the nuclear pore complex (nuclear basket). TREX-2/AMEX participates in mRNA export and accurate chromatin positioning in the nucleus by tethering genes to the nuclear periphery. Recruited to the su(Hw) insulators via its interaction with su(Hw) and participates in the barrier activity of such insulators. In contrast, it does not participate in the enhancer-blocking activity of the su(Hw) insulators. This chain is Enhancer of yellow 2 transcription factor, found in Drosophila melanogaster (Fruit fly).